Reading from the N-terminus, the 721-residue chain is Polyribonucleotide nucleotidyltransferase (721 aa).

Mg(2+) contacts are provided by Asp495 and Asp501. Residues 562–621 (PRLLSFRIDPELIGTVIGPGGRTIKGITERTNTKIDIEDSGIVTIASHDGAAADEAQKII) form the KH domain. The S1 motif domain occupies 631 to 699 (GEVFSGSITR…NRGRINLTLR (69 aa)). Positions 698–721 (LRGVPQSGDGAGEEPQPTPVAPLS) are disordered.

The protein belongs to the polyribonucleotide nucleotidyltransferase family. Requires Mg(2+) as cofactor.

It localises to the cytoplasm. It catalyses the reaction RNA(n+1) + phosphate = RNA(n) + a ribonucleoside 5'-diphosphate. Functionally, involved in mRNA degradation. Catalyzes the phosphorolysis of single-stranded polyribonucleotides processively in the 3'- to 5'-direction. The sequence is that of Polyribonucleotide nucleotidyltransferase from Parasynechococcus marenigrum (strain WH8102).